The following is a 51-amino-acid chain: Large ribosomal subunit protein eL39 (51 aa).

This sequence belongs to the eukaryotic ribosomal protein eL39 family.

This is Large ribosomal subunit protein eL39 from Thermococcus sibiricus (strain DSM 12597 / MM 739).